Consider the following 131-residue polypeptide: Class I hydrophobin POH2 (131 aa).

The first 21 residues, 1 to 21 (MFFRTSSLFTTIVAFTVMAAA), serve as a signal peptide directing secretion. 4 disulfide bridges follow: Cys50-Cys110, Cys57-Cys104, Cys58-Cys91, and Cys111-Cys124. Asn115 and Asn128 each carry an N-linked (GlcNAc...) asparagine glycan.

It belongs to the fungal hydrophobin family. As to quaternary structure, self-assembles to form functional amyloid fibrils called rodlets. Self-assembly into fibrillar rodlets occurs spontaneously at hydrophobic:hydrophilic interfaces and the rodlets further associate laterally to form amphipathic monolayers. Expressionn is switched off in the fruiting bodies but abundantly expressed in the vegetative mycelium of both monokaryon and dikaryon.

The protein localises to the secreted. It is found in the cell wall. Its function is as follows. Aerial growth, conidiation, and dispersal of filamentous fungi in the environment rely upon a capability of their secreting small amphipathic proteins called hydrophobins (HPBs) with low sequence identity. Class I can self-assemble into an outermost layer of rodlet bundles on aerial cell surfaces, conferring cellular hydrophobicity that supports fungal growth, development and dispersal; whereas Class II form highly ordered films at water-air interfaces through intermolecular interactions but contribute nothing to the rodlet structure. POH2 is a class I hydrophobin that causes a large drop in the water-surface tension, enabling hyphae to breach the interface and grow into the air, in both the primary and the secondary mycelium. In the latter mycelium POH2 maight also play a role in the emergence of fruiting bodies. Secreted POH2 could also play a role in facilitating lignin degradation. The protein is Class I hydrophobin POH2 of Pleurotus ostreatus (Oyster mushroom).